The sequence spans 235 residues: 5'-methylthioadenosine/S-adenosylhomocysteine nucleosidase (235 aa).

E13 functions as the Proton acceptor in the catalytic mechanism. Substrate is bound by residues G79, M154, and 175–176; that span reads ME. The Proton donor role is filled by D199.

This sequence belongs to the PNP/UDP phosphorylase family. MtnN subfamily.

The enzyme catalyses S-adenosyl-L-homocysteine + H2O = S-(5-deoxy-D-ribos-5-yl)-L-homocysteine + adenine. It catalyses the reaction S-methyl-5'-thioadenosine + H2O = 5-(methylsulfanyl)-D-ribose + adenine. The catalysed reaction is 5'-deoxyadenosine + H2O = 5-deoxy-D-ribose + adenine. It participates in amino-acid biosynthesis; L-methionine biosynthesis via salvage pathway; S-methyl-5-thio-alpha-D-ribose 1-phosphate from S-methyl-5'-thioadenosine (hydrolase route): step 1/2. Functionally, catalyzes the irreversible cleavage of the glycosidic bond in both 5'-methylthioadenosine (MTA) and S-adenosylhomocysteine (SAH/AdoHcy) to adenine and the corresponding thioribose, 5'-methylthioribose and S-ribosylhomocysteine, respectively. Also cleaves 5'-deoxyadenosine, a toxic by-product of radical S-adenosylmethionine (SAM) enzymes, into 5-deoxyribose and adenine. The chain is 5'-methylthioadenosine/S-adenosylhomocysteine nucleosidase from Chromohalobacter salexigens (strain ATCC BAA-138 / DSM 3043 / CIP 106854 / NCIMB 13768 / 1H11).